A 352-amino-acid chain; its full sequence is tRNA-specific 2-thiouridylase MnmA (352 aa).

Residues 9-16 (ALSGGVDS) and methionine 35 each bind ATP. The Nucleophile role is filled by cysteine 96. A disulfide bond links cysteine 96 and cysteine 192. Glycine 120 is a binding site for ATP. The segment at 142–144 (KDQ) is interaction with tRNA. Cysteine 192 acts as the Cysteine persulfide intermediate in catalysis. The tract at residues 299 to 300 (RY) is interaction with tRNA.

Belongs to the MnmA/TRMU family.

It is found in the cytoplasm. The catalysed reaction is S-sulfanyl-L-cysteinyl-[protein] + uridine(34) in tRNA + AH2 + ATP = 2-thiouridine(34) in tRNA + L-cysteinyl-[protein] + A + AMP + diphosphate + H(+). In terms of biological role, catalyzes the 2-thiolation of uridine at the wobble position (U34) of tRNA, leading to the formation of s(2)U34. This is tRNA-specific 2-thiouridylase MnmA from Acidithiobacillus ferrooxidans (strain ATCC 23270 / DSM 14882 / CIP 104768 / NCIMB 8455) (Ferrobacillus ferrooxidans (strain ATCC 23270)).